We begin with the raw amino-acid sequence, 215 residues long: HTH-type transcriptional repressor FabR (215 aa).

An HTH tetR-type domain is found at 10 to 70 (KTRRSLVEAA…TMVDESGLML (61 aa)). The segment at residues 33 to 52 (SLREVAREAGIAPTSFYRHF) is a DNA-binding region (H-T-H motif).

As to quaternary structure, homodimer.

It localises to the cytoplasm. Its function is as follows. Represses the transcription of fabB, involved in unsaturated fatty acid (UFA) biosynthesis. By controlling UFA production, FabR directly influences the physical properties of the membrane bilayer. In Shigella boydii serotype 18 (strain CDC 3083-94 / BS512), this protein is HTH-type transcriptional repressor FabR.